The sequence spans 94 residues: Co-chaperonin GroES (94 aa).

Belongs to the GroES chaperonin family. In terms of assembly, heptamer of 7 subunits arranged in a ring. Interacts with the chaperonin GroEL.

The protein localises to the cytoplasm. Its function is as follows. Together with the chaperonin GroEL, plays an essential role in assisting protein folding. The GroEL-GroES system forms a nano-cage that allows encapsulation of the non-native substrate proteins and provides a physical environment optimized to promote and accelerate protein folding. GroES binds to the apical surface of the GroEL ring, thereby capping the opening of the GroEL channel. In Tetragenococcus halophilus (Pediococcus halophilus), this protein is Co-chaperonin GroES.